Here is a 130-residue protein sequence, read N- to C-terminus: uncharacterized protein (130 aa).

The first 19 residues, 1–19 (MLAPLFLCCLRNLFRKLIS), serve as a signal peptide directing secretion.

The protein resides in the secreted. This is an uncharacterized protein from Homo sapiens (Human).